The chain runs to 352 residues: UDP-N-acetylglucosamine--N-acetylmuramyl-(pentapeptide) pyrophosphoryl-undecaprenol N-acetylglucosamine transferase 2 (352 aa).

UDP-N-acetyl-alpha-D-glucosamine contacts are provided by residues 11 to 13, arginine 164, serine 194, and glutamine 289; that span reads SAG.

It belongs to the glycosyltransferase 28 family. MurG subfamily.

It localises to the cell membrane. The catalysed reaction is di-trans,octa-cis-undecaprenyl diphospho-N-acetyl-alpha-D-muramoyl-L-alanyl-D-glutamyl-meso-2,6-diaminopimeloyl-D-alanyl-D-alanine + UDP-N-acetyl-alpha-D-glucosamine = di-trans,octa-cis-undecaprenyl diphospho-[N-acetyl-alpha-D-glucosaminyl-(1-&gt;4)]-N-acetyl-alpha-D-muramoyl-L-alanyl-D-glutamyl-meso-2,6-diaminopimeloyl-D-alanyl-D-alanine + UDP + H(+). It functions in the pathway cell wall biogenesis; peptidoglycan biosynthesis. In terms of biological role, cell wall formation. Catalyzes the transfer of a GlcNAc subunit on undecaprenyl-pyrophosphoryl-MurNAc-pentapeptide (lipid intermediate I) to form undecaprenyl-pyrophosphoryl-MurNAc-(pentapeptide)GlcNAc (lipid intermediate II). This is UDP-N-acetylglucosamine--N-acetylmuramyl-(pentapeptide) pyrophosphoryl-undecaprenol N-acetylglucosamine transferase 2 from Bacillus thuringiensis subsp. konkukian (strain 97-27).